Here is a 240-residue protein sequence, read N- to C-terminus: tRNA1(Val) (adenine(37)-N6)-methyltransferase (240 aa).

The protein belongs to the methyltransferase superfamily. tRNA (adenine-N(6)-)-methyltransferase family.

It is found in the cytoplasm. The catalysed reaction is adenosine(37) in tRNA1(Val) + S-adenosyl-L-methionine = N(6)-methyladenosine(37) in tRNA1(Val) + S-adenosyl-L-homocysteine + H(+). Functionally, specifically methylates the adenine in position 37 of tRNA(1)(Val) (anticodon cmo5UAC). The protein is tRNA1(Val) (adenine(37)-N6)-methyltransferase of Christiangramia forsetii (strain DSM 17595 / CGMCC 1.15422 / KT0803) (Gramella forsetii).